The sequence spans 329 residues: Mitochondrial substrate carrier family protein W (329 aa).

Over 1–39 (MTTNNSNDNNKRYGIIKQQLQQQQQQHHQQHEQHSRLVE) the chain is Mitochondrial intermembrane. 3 Solcar repeats span residues 34–119 (HSRL…CKEL), 133–221 (ESPL…FKSI), and 231–321 (LGIV…IKKF). A helical transmembrane segment spans residues 40–60 (MTAGCGAGFMASLFTTPLDVI). Over 61–90 (KTTLQVDNSSNKTIMSTVKSILDRKGGVKN) the chain is Mitochondrial matrix. The chain crosses the membrane as a helical span at residues 91–111 (LYLGLKPTLVGQIPSWAVYFS). Topologically, residues 112 to 135 (TYTFCKELFTKENDKHSLLEKESP) are mitochondrial intermembrane. The helical transmembrane segment at 136–156 (LIFMTSAIIAGAATSICTSPI) threads the bilayer. The Mitochondrial matrix segment spans residues 157 to 193 (WLIKTRFITQEMVGRQKKYRGIVHSMVSIYHEEGFRG). Residues 194-214 (LYKGLGPSLLGVLHVGVQFPL) form a helical membrane-spanning segment. The Mitochondrial intermembrane portion of the chain corresponds to 215–230 (YEKFKSILKEKNKNKE). A helical transmembrane segment spans residues 231–251 (LGIVEIMIASSVSKIIASVVA). The Mitochondrial matrix portion of the chain corresponds to 252 to 296 (YPHEVLRARSQDSSPDSPNRTYRGNIIQMFKQIVREEGWRGLYRG). The chain crosses the membrane as a helical span at residues 297 to 315 (MGVNLLRVTPSCVITFTSY). Over 316–329 (EYIKKFLSQNQNHF) the chain is Mitochondrial intermembrane.

It belongs to the mitochondrial carrier (TC 2.A.29) family.

The protein resides in the mitochondrion inner membrane. Functionally, mitochondrial solute carriers shuttle metabolites, nucleotides, and cofactors through the mitochondrial inner membrane. This is Mitochondrial substrate carrier family protein W (mcfW) from Dictyostelium discoideum (Social amoeba).